Reading from the N-terminus, the 508-residue chain is Protein adenylyltransferase fic-1 (508 aa).

A helical membrane pass occupies residues 44 to 64 (TVIIISVLVSLICQHFVPYAV). TPR repeat units lie at residues 147 to 180 (AILA…APTN) and 181 to 214 (PQIL…DPGN). The short motif at 270 to 275 (TVAIEG) is the Inhibitory (S/T)XXXE(G/N) motif element. Glu-274 provides a ligand contact to ATP. Residues 326–461 (ISIDDILEMH…LRPFVRYVAK (136 aa)) form the Fido domain. Thr-352 is modified (O-AMP-threonine; by autocatalysis). ATP is bound at residue 357-360 (VGRF). The active site involves His-404. Residues 408-415 (DGNGRTAR), 440-441 (YY), and Asn-448 contribute to the ATP site. The residue at position 476 (Thr-476) is an O-AMP-threonine; by autocatalysis. The interval 482-508 (LNSGDSKLTPEESEVSEKIEAECRAGN) is disordered. The segment covering 496-508 (VSEKIEAECRAGN) has biased composition (basic and acidic residues).

The protein belongs to the fic family. In terms of assembly, forms homodimers; homodimerization might be required for adenylyltransferase activity. In terms of tissue distribution, ubiquitously expressed, with high expression in the germline.

It is found in the endoplasmic reticulum membrane. The protein resides in the nucleus membrane. It carries out the reaction L-tyrosyl-[protein] + ATP = O-(5'-adenylyl)-L-tyrosyl-[protein] + diphosphate. The enzyme catalyses L-threonyl-[protein] + ATP = 3-O-(5'-adenylyl)-L-threonyl-[protein] + diphosphate. The catalysed reaction is 3-O-(5'-adenylyl)-L-threonyl-[protein] + H2O = L-threonyl-[protein] + AMP + H(+). Its activity is regulated as follows. The side chain of Glu-274 determines which of the two opposing activities (AMPylase or de-AMPylase) will take place. In response to endoplasmic reticulum stress, mediates de-AMPylase activity. Adenylyltransferase activity is inhibited by the inhibitory helix present at the N-terminus: Glu-274 binds ATP and competes with ATP-binding at Arg-415, thereby preventing adenylyltransferase activity. In unstressed cells, disengagement of Glu-274 promotes adenylyltransferase activity. Activation dissociates ATP-binding from Glu-274, allowing ordered binding of the entire ATP moiety with the alpha-phosphate in an orientation that is productive for accepting an incoming target hydroxyl side chain. In terms of biological role, protein that can both mediate the addition of adenosine 5'-monophosphate (AMP) to specific residues of target proteins (AMPylation), and the removal of the same modification from target proteins (de-AMPylation), depending on the context. The side chain of Glu-274 determines which of the two opposing activities (AMPylase or de-AMPylase) will take place. Adenylyltransferase that mediates the addition of adenosine 5'-monophosphate (AMP) to specific residues of target proteins. In vivo target proteins include the heat-shock 70 family proteins hsp-1 and hsp-3 and the translation elongation factors eef-1A, eef-1G and eef-2. Can AMPylate core histone H3 in vitro. Can also act as a phosphodiesterase by mediating removal of ATP (de-AMPylation) from target proteins. Decreases susceptibility to P.aeruginosa-mediated killing and might therefore play a role in the innate immune response. The protein is Protein adenylyltransferase fic-1 of Caenorhabditis elegans.